The chain runs to 180 residues: Shikimate kinase (180 aa).

19-24 (GAGKTT) contacts ATP. A Mg(2+)-binding site is contributed by Thr-23. The substrate site is built by Asp-41, Arg-65, and Gly-87. Residue Arg-125 participates in ATP binding. Arg-144 serves as a coordination point for substrate.

This sequence belongs to the shikimate kinase family. Monomer. Requires Mg(2+) as cofactor.

The protein localises to the cytoplasm. It carries out the reaction shikimate + ATP = 3-phosphoshikimate + ADP + H(+). Its pathway is metabolic intermediate biosynthesis; chorismate biosynthesis; chorismate from D-erythrose 4-phosphate and phosphoenolpyruvate: step 5/7. Functionally, catalyzes the specific phosphorylation of the 3-hydroxyl group of shikimic acid using ATP as a cosubstrate. The chain is Shikimate kinase from Acinetobacter baylyi (strain ATCC 33305 / BD413 / ADP1).